The chain runs to 351 residues: L-threonine 3-dehydrogenase (351 aa).

Zn(2+) is bound at residue C39. Catalysis depends on charge relay system residues T41 and H44. H64, E65, C94, C97, C100, and C108 together coordinate Zn(2+). NAD(+) contacts are provided by residues I176, D196, R201, 271 to 273 (LGI), and 295 to 296 (IY).

This sequence belongs to the zinc-containing alcohol dehydrogenase family. As to quaternary structure, homotetramer. Requires Zn(2+) as cofactor.

It localises to the cytoplasm. It catalyses the reaction L-threonine + NAD(+) = (2S)-2-amino-3-oxobutanoate + NADH + H(+). It participates in amino-acid degradation; L-threonine degradation via oxydo-reductase pathway; glycine from L-threonine: step 1/2. Functionally, catalyzes the NAD(+)-dependent oxidation of L-threonine to 2-amino-3-ketobutyrate. The protein is L-threonine 3-dehydrogenase of Francisella tularensis subsp. mediasiatica (strain FSC147).